Reading from the N-terminus, the 829-residue chain is MEGGDSTISVAGRGASGSAVVAATVQAILQDDCYSEFLNEDFDVKTYTSQSIHQAVIAEQLAKLAQGISQLDKELHLQVVARHEDLLAQATGIESLEGVLQMMQTRIGALQGAVDRMKSKIVEPYNKIVARTAQLARLQVACDLLRRIIRILYLSKRLQGQLQGGSREITKAAQSLNELDYLSQGIDLSGIEVIENDLLFIARARLEVENQAKRLLEQGVETQNPTQVGTALQVFHNLGTLKETVTSVVDGYCAALEDSINNALDVKVLTQPSQSAVRGGPGRAAMPTPGSTAGFRASLWTNMEKLMDHICAACGQVQHLQKVLTKKRDPVSHICFIEEIIKDGQPEILYMFWNAVTLALSSHFHSATNSSMFLKQAFEGEYPKLLRLYNDLWKRLQQSSQNTQGTFSPSGTPDLCVDLPHMEDDTQDMFRLKRPDYDPEKALKDSLQPYEAAYLSKSLSRLFDPINLVFPPGGRNPPSSDELDGITKTITSELNVAAVDANLTLAVSKNVAKTIQLYAVKSEQLLSTQGDASQVIGPLTEGQKRNVGVVNSLFKLHQSVTKVVASQSSFSATAEQTIMSALKTIHDLMGNAIQPLLTSVADAIEAIIITMHQEDFSGASSSSGKPDVPCSLYMKELQGFIARVMNDYFKHFECLDFVFDNTEAIAQRAIELFIRNASLIRPLGEGGKLRLAADFAQMELAVGPLCRRVSDLGKSYRMLRSFRPLLFQTSEHVADSPAVGDIIPFSIIIQFLFTRAPAELKSPFQRAEWSHARFSQWLDDHPSEKDRLLLLRGALEAYVQSVRSRDGKEFAPVYPIMVQLLQKAMSALQ.

Ser-166 is subject to Phosphoserine.

This sequence belongs to the COG5 family. Component of the conserved oligomeric Golgi complex which is composed of eight different subunits and is required for normal Golgi morphology and localization.

The protein resides in the cytoplasm. It localises to the cytosol. The protein localises to the golgi apparatus membrane. Its function is as follows. Required for normal Golgi function. This chain is Conserved oligomeric Golgi complex subunit 5 (Cog5), found in Mus musculus (Mouse).